The sequence spans 419 residues: Hyaluronan synthase (419 aa).

5 consecutive transmembrane segments (helical) span residues 8-28 (LIVL…MYLF), 33-53 (VGIY…LSFL), 318-338 (IVAL…VAIG), 345-365 (AIQL…IVAL), and 376-396 (PASF…LQPL).

Belongs to the NodC/HAS family. The cofactor is Mg(2+).

It is found in the cell membrane. The catalysed reaction is [hyaluronan](n) + UDP-N-acetyl-alpha-D-glucosamine = N-acetyl-beta-D-glucosaminyl-(1-&gt;4)-[hyaluronan](n) + UDP + H(+). It catalyses the reaction N-acetyl-beta-D-glucosaminyl-(1-&gt;4)-[hyaluronan](n) + UDP-alpha-D-glucuronate = [hyaluronan](n+1) + UDP + H(+). Its pathway is glycan biosynthesis; hyaluronan biosynthesis. Glycosaminoglycan synthesis. The hyaluronic acid capsule is involved in the pathogenicity of group A Streptococci; it may be the major virulence determinant. In Streptococcus pyogenes serotype M3 (strain ATCC BAA-595 / MGAS315), this protein is Hyaluronan synthase (hasA).